A 53-amino-acid polypeptide reads, in one-letter code: EVKYDPCFGHKIDRINHVSNLGCPSLRDPRPTAPAALRIIRDLHPDSKQSQAA.

C7 and C23 form a disulfide bridge. The propeptide occupies 39–53 (IIRDLHPDSKQSQAA).

It belongs to the natriuretic peptide family. In terms of tissue distribution, expressed by the venom gland.

The protein resides in the secreted. Functionally, exhibits vasodilator, natriuretic and diuretic properties in animal models and human tissues. Acts by stimulating cGMP via the natriuretic peptide receptor 1 (NPR1). Is a poor agonist of the atrial natriuretic peptide receptor 2 (NPR2). Is not degraded by neutral endopeptidase (NEP/MME). Binds to atrial natriuretic peptide clearance receptor (NPR-C/NPR3), which may be responsible of the removal of DNP from the circulation. Increases calcium uptake and induces histamine release from rat peritoneal mast cells. Increases calcium-activated potassium (KCa) current in gastric antral circular smooth muscle cells by increasing cGMP production and activating inositol trisphosphate receptors (IP3Rs). In vivo, reduces both systolic and diastolic blood pressure with no effect on heart rate, when intravenously injected in conscious rabbits. This is Natriuretic peptide DNP-2 from Dendroaspis angusticeps (Eastern green mamba).